The sequence spans 442 residues: ATP-dependent protease ATPase subunit HslU (442 aa).

Residues isoleucine 18 and 60 to 65 each bind ATP; that span reads GVGKTE. The interval 133 to 156 is disordered; sequence DALLPKPKNDWDNTDSDTSSNTRQ. ATP contacts are provided by aspartate 255, glutamate 320, and arginine 392.

The protein belongs to the ClpX chaperone family. HslU subfamily. In terms of assembly, a double ring-shaped homohexamer of HslV is capped on each side by a ring-shaped HslU homohexamer. The assembly of the HslU/HslV complex is dependent on binding of ATP.

The protein resides in the cytoplasm. ATPase subunit of a proteasome-like degradation complex; this subunit has chaperone activity. The binding of ATP and its subsequent hydrolysis by HslU are essential for unfolding of protein substrates subsequently hydrolyzed by HslV. HslU recognizes the N-terminal part of its protein substrates and unfolds these before they are guided to HslV for hydrolysis. This is ATP-dependent protease ATPase subunit HslU from Shewanella sp. (strain ANA-3).